We begin with the raw amino-acid sequence, 396 residues long: Probable sugar efflux transporter (396 aa).

12 helical membrane-spanning segments follow: residues 15-35 (VVTLAIAAFIFNTTEFVPVGL), 50-70 (VGIMLTIYAWVVAVMSLPFML), 81-101 (LICLFVLFIASHVLSFLAWNF), 103-123 (VLVISRIGIAFTHAIFWSITA), 136-156 (AQALSLIATGTALAMVLGLPI), 169-189 (TFFAIGMGALITLICLIKLLP), 209-229 (PALMSLYLLTAVVVTAHYTAY), 246-266 (FATVLLLILGGAGIIGSLVFG), 275-295 (LLVSIAISLLVVCLLLLLPAA), 301-321 (LALLSIFWGIAIMVIGLGMQV), 333-353 (VAMALFSGIFNIGIGAGALAG), and 364-384 (TIGYIGAVPACAALVWAVLIF).

Belongs to the major facilitator superfamily. SotB (TC 2.A.1.2) family.

It is found in the cell inner membrane. Functionally, involved in the efflux of sugars. The physiological role may be the reduction of the intracellular concentration of toxic sugars or sugar metabolites. This Salmonella arizonae (strain ATCC BAA-731 / CDC346-86 / RSK2980) protein is Probable sugar efflux transporter.